The primary structure comprises 270 residues: tRNA pseudouridine synthase A (270 aa).

Catalysis depends on D51, which acts as the Nucleophile. Y109 contacts substrate.

Belongs to the tRNA pseudouridine synthase TruA family. Homodimer.

The enzyme catalyses uridine(38/39/40) in tRNA = pseudouridine(38/39/40) in tRNA. Its function is as follows. Formation of pseudouridine at positions 38, 39 and 40 in the anticodon stem and loop of transfer RNAs. This is tRNA pseudouridine synthase A from Burkholderia mallei (strain ATCC 23344).